Here is a 210-residue protein sequence, read N- to C-terminus: MKIVEVRHPLVQHKIGLLRDAALSTKGFRELVTELGTLLAYEATANLDTESHTQPGWAGPVTVQRIAGAKITLVPILRAGLGMLPGVLALIPAARVSVVGLQRDEETLQPVPYFERLTGRLEERDALILDPMLATGGTLMATIDMLKRAGARRIKGIFLVAAPEGLKALEAVHPDVEVYTAAIDDHLNDKGYILPGLGDAGDRIFGTRLE.

5-phospho-alpha-D-ribose 1-diphosphate contacts are provided by residues Arg-78, Arg-103, and 130–138 (DPMLATGGT). Uracil-binding positions include Ile-193 and 198–200 (GDA). Asp-199 contacts 5-phospho-alpha-D-ribose 1-diphosphate.

This sequence belongs to the UPRTase family. The cofactor is Mg(2+).

The enzyme catalyses UMP + diphosphate = 5-phospho-alpha-D-ribose 1-diphosphate + uracil. It functions in the pathway pyrimidine metabolism; UMP biosynthesis via salvage pathway; UMP from uracil: step 1/1. With respect to regulation, allosterically activated by GTP. Catalyzes the conversion of uracil and 5-phospho-alpha-D-ribose 1-diphosphate (PRPP) to UMP and diphosphate. The chain is Uracil phosphoribosyltransferase from Xanthomonas euvesicatoria pv. vesicatoria (strain 85-10) (Xanthomonas campestris pv. vesicatoria).